The chain runs to 510 residues: NAD(P)H-quinone oxidoreductase subunit 2 A, chloroplastic (510 aa).

12 helical membrane-spanning segments follow: residues 31–51, 59–79, 99–119, 124–144, 149–169, 183–203, 229–249, 295–315, 323–343, 354–374, 395–415, and 418–438; these read FIFP…IDLT, WFYF…LFRW, IFQF…VEYI, MAIT…MFLC, LITI…LSGY, YLLM…WLYG, ISIA…PAPF, WHLL…LLAI, MLAY…IVGD, YMLF…LFGL, ALSL…AGFF, and LYLF…IGLL.

Belongs to the complex I subunit 2 family. As to quaternary structure, NDH is composed of at least 16 different subunits, 5 of which are encoded in the nucleus.

The protein resides in the plastid. The protein localises to the chloroplast thylakoid membrane. The catalysed reaction is a plastoquinone + NADH + (n+1) H(+)(in) = a plastoquinol + NAD(+) + n H(+)(out). The enzyme catalyses a plastoquinone + NADPH + (n+1) H(+)(in) = a plastoquinol + NADP(+) + n H(+)(out). Functionally, NDH shuttles electrons from NAD(P)H:plastoquinone, via FMN and iron-sulfur (Fe-S) centers, to quinones in the photosynthetic chain and possibly in a chloroplast respiratory chain. The immediate electron acceptor for the enzyme in this species is believed to be plastoquinone. Couples the redox reaction to proton translocation, and thus conserves the redox energy in a proton gradient. This is NAD(P)H-quinone oxidoreductase subunit 2 A, chloroplastic from Saccharum officinarum (Sugarcane).